The sequence spans 875 residues: Receptor-like protein 33 (875 aa).

An N-terminal signal peptide occupies residues 1-23; sequence MSLIPITFYFLFLFFSNFRGVFA. Topologically, residues 24 to 822 are extracellular; sequence VPNIHLCHFE…GESETLESEQ (799 aa). N-linked (GlcNAc...) asparagine glycosylation is found at asparagine 65, asparagine 103, asparagine 133, asparagine 146, and asparagine 181. LRR repeat units follow at residues 110–133, 134–157, 159–182, 183–205, 206–230, 231–254, 256–278, 280–302, 303–327, and 329–351; these read FHFL…SIGN, LSHL…SLGN, FHLT…LGNL, SYLT…SFGS, LNQL…VINL, TKLS…ITSL, ILES…LFTI, SITL…NISS, PSNL…ISRL, and NLRT…IFSH. N-linked (GlcNAc...) asparagine glycosylation is found at asparagine 229 and asparagine 250. The N-linked (GlcNAc...) asparagine glycan is linked to asparagine 299. One copy of the LRR 11; degenerate repeat lies at 352–377; that stretch reads LKLLGNLYLSHSNTTTTIDLNAVLSC. N-linked (GlcNAc...) asparagine glycosylation is found at asparagine 364, asparagine 395, and asparagine 411. 15 LRR repeats span residues 378–401, 404–427, 428–451, 455–477, 479–502, 503–528, 530–549, 550–573, 575–596, 597–619, 620–643, 686–710, 711–734, 735–758, and 760–783; these read FKML…SVSD, LGLI…LRTQ, RQMR…LLLQ, MHIS…TVVP, PSMK…ICSL, RSLI…KFKS, LSDL…KTII, KSLR…LIHF, TLEV…WLSS, LKKL…KTRF, PKLR…CFVE, LKIY…IGLL, KELH…MGNL, RELE…LGNL, and YLAY…QFRT. N-linked (GlcNAc...) asparagine glycans are attached at residues asparagine 490 and asparagine 514. Asparagine 587 carries N-linked (GlcNAc...) asparagine glycosylation. A glycan (N-linked (GlcNAc...) asparagine) is linked at asparagine 633. 3 N-linked (GlcNAc...) asparagine glycosylation sites follow: asparagine 717, asparagine 757, and asparagine 765. Residues 823 to 843 form a helical membrane-spanning segment; that stretch reads VLSWIAAAIGFTPGIVLGLTI. Residues 844–875 lie on the Cytoplasmic side of the membrane; the sequence is GHIVLSSKPRWFFKVLYINNSRRRRRTRSEKS.

Belongs to the RLP family.

Its subcellular location is the cell membrane. The protein is Receptor-like protein 33 of Arabidopsis thaliana (Mouse-ear cress).